The chain runs to 123 residues: Large ribosomal subunit protein uL22c (123 aa).

The protein belongs to the universal ribosomal protein uL22 family. As to quaternary structure, part of the 50S ribosomal subunit.

It is found in the plastid. It localises to the chloroplast. Its function is as follows. This protein binds specifically to 23S rRNA. In terms of biological role, the globular domain of the protein is located near the polypeptide exit tunnel on the outside of the subunit, while an extended beta-hairpin is found that lines the wall of the exit tunnel in the center of the 70S ribosome. This Chara vulgaris (Common stonewort) protein is Large ribosomal subunit protein uL22c (rpl22).